We begin with the raw amino-acid sequence, 140 residues long: uncharacterized protein (140 aa).

A run of 4 helical transmembrane segments spans residues L4 to G24, E56 to W76, S84 to S104, and I109 to A129.

It localises to the cell membrane. In terms of biological role, may be important for peptidoglycan remodeling. This is an uncharacterized protein from Bacillus subtilis (strain 168).